A 407-amino-acid polypeptide reads, in one-letter code: Altered inheritance of mitochondria protein 6 (407 aa).

Positions 1–23 (MNGVKSWTVTLVFYFLILAVLIA) are cleaved as a signal peptide.

This sequence belongs to the AIM6 family.

The chain is Altered inheritance of mitochondria protein 6 (AIM6) from Zygosaccharomyces rouxii (strain ATCC 2623 / CBS 732 / NBRC 1130 / NCYC 568 / NRRL Y-229).